The sequence spans 149 residues: Hordoindoline-A (149 aa).

A signal peptide spans 1–19 (MKALFLMGLLALVASAAFA). A propeptide spanning residues 20–28 (QYGEVVGSY) is cleaved from the precursor. A propeptide spans 148–149 (YW) (removed in mature form).

Post-translationally, five disulfide bonds are present. As to expression, found in endosperm and aleurone layer of developing kernels, but not in the embryo.

Its subcellular location is the membrane. The protein localises to the secreted. It localises to the extracellular space. Functionally, acts as a membranotoxin, probably through its antibacterial and antifungal activities, contributing to the defense mechanism of the plant against predators. Forms monovalent cation-selective ion channels in membranes. Contributes to grain texture and hardness. The sequence is that of Hordoindoline-A (HINA) from Hordeum vulgare (Barley).